A 242-amino-acid polypeptide reads, in one-letter code: Biosynthetic peptidoglycan transglycosylase (242 aa).

The chain crosses the membrane as a helical span at residues 12 to 32 (LLLWLIALSVLLVLLLRWVPP).

The protein belongs to the glycosyltransferase 51 family.

It is found in the cell inner membrane. The enzyme catalyses [GlcNAc-(1-&gt;4)-Mur2Ac(oyl-L-Ala-gamma-D-Glu-L-Lys-D-Ala-D-Ala)](n)-di-trans,octa-cis-undecaprenyl diphosphate + beta-D-GlcNAc-(1-&gt;4)-Mur2Ac(oyl-L-Ala-gamma-D-Glu-L-Lys-D-Ala-D-Ala)-di-trans,octa-cis-undecaprenyl diphosphate = [GlcNAc-(1-&gt;4)-Mur2Ac(oyl-L-Ala-gamma-D-Glu-L-Lys-D-Ala-D-Ala)](n+1)-di-trans,octa-cis-undecaprenyl diphosphate + di-trans,octa-cis-undecaprenyl diphosphate + H(+). Its pathway is cell wall biogenesis; peptidoglycan biosynthesis. In terms of biological role, peptidoglycan polymerase that catalyzes glycan chain elongation from lipid-linked precursors. This chain is Biosynthetic peptidoglycan transglycosylase, found in Stutzerimonas stutzeri (strain A1501) (Pseudomonas stutzeri).